We begin with the raw amino-acid sequence, 515 residues long: Fatty acyl-CoA reductase 1 (515 aa).

Residues 1–465 are Cytoplasmic-facing; it reads MVSIPEYYEG…ARKHLNKLRN (465 aa). Residues 451–507 are necessary and sufficient for PEX19-mediated localization into peroxisome membrane; it reads SGLPAARKHLNKLRNIRYGFNTILVILIWRIFIARSQMARNIWYFVVSLCYKFLSYF. The chain crosses the membrane as a helical span at residues 466–483; sequence IRYGFNTILVILIWRIFI. Topologically, residues 484–515 are peroxisomal; sequence ARSQMARNIWYFVVSLCYKFLSYFRASSTMRY.

Belongs to the fatty acyl-CoA reductase family. As to quaternary structure, interacts with PEX19; PEX19 mediates the targeting of FAR1 to peroxisomes.

The protein resides in the peroxisome membrane. It carries out the reaction a long-chain fatty acyl-CoA + 2 NADPH + 2 H(+) = a long-chain primary fatty alcohol + 2 NADP(+) + CoA. The catalysed reaction is hexadecanoyl-CoA + 2 NADPH + 2 H(+) = hexadecan-1-ol + 2 NADP(+) + CoA. The enzyme catalyses octadecanoyl-CoA + 2 NADPH + 2 H(+) = octadecan-1-ol + 2 NADP(+) + CoA. It catalyses the reaction eicosanoyl-CoA + 2 NADPH + 2 H(+) = eicosan-1-ol + 2 NADP(+) + CoA. It carries out the reaction (9Z)-octadecenoyl-CoA + 2 NADPH + 2 H(+) = (9Z)-octadecen-1-ol + 2 NADP(+) + CoA. The catalysed reaction is (9Z,12Z)-octadecadienoyl-CoA + 2 NADPH + 2 H(+) = (9Z,12Z)-octadecadien-1-ol + 2 NADP(+) + CoA. The enzyme catalyses 16-methylheptadecanoyl-CoA + 2 NADPH + 2 H(+) = 16-methylheptadecan-1-ol + 2 NADP(+) + CoA. It catalyses the reaction 18-methylnonadecanoyl-CoA + 2 NADPH + 2 H(+) = 18-methylnonadecan-1-ol + 2 NADP(+) + CoA. Its function is as follows. Catalyzes the reduction of saturated and unsaturated C16 or C18 fatty acyl-CoA to fatty alcohols. It plays an essential role in the production of ether lipids/plasmalogens which synthesis requires fatty alcohols. In parallel, it is also required for wax monoesters production since fatty alcohols also constitute a substrate for their synthesis. In Homo sapiens (Human), this protein is Fatty acyl-CoA reductase 1.